The sequence spans 118 residues: Ribonuclease P protein component (118 aa).

Belongs to the RnpA family. As to quaternary structure, consists of a catalytic RNA component (M1 or rnpB) and a protein subunit.

The enzyme catalyses Endonucleolytic cleavage of RNA, removing 5'-extranucleotides from tRNA precursor.. Its function is as follows. RNaseP catalyzes the removal of the 5'-leader sequence from pre-tRNA to produce the mature 5'-terminus. It can also cleave other RNA substrates such as 4.5S RNA. The protein component plays an auxiliary but essential role in vivo by binding to the 5'-leader sequence and broadening the substrate specificity of the ribozyme. This chain is Ribonuclease P protein component, found in Rickettsia rickettsii (strain Iowa).